The primary structure comprises 127 residues: MAYGQKILKGDAYKRAAIKRRHIRIRKNLSGTAERPRLVVTRSNRHIVAQVIDDIKGHTLASASTLDTSIRGGEADKSAQAKQVGALVAERAKAAGVEAVVFDRGGNQYAGRIAALADAAREAGLKF.

It belongs to the universal ribosomal protein uL18 family. As to quaternary structure, part of the 50S ribosomal subunit; part of the 5S rRNA/L5/L18/L25 subcomplex. Contacts the 5S and 23S rRNAs.

In terms of biological role, this is one of the proteins that bind and probably mediate the attachment of the 5S RNA into the large ribosomal subunit, where it forms part of the central protuberance. This Streptomyces coelicolor (strain ATCC BAA-471 / A3(2) / M145) protein is Large ribosomal subunit protein uL18.